The chain runs to 148 residues: Small ribosomal subunit protein bS16 (148 aa).

The interval 107–148 is disordered; the sequence is AAARAAAGAEDRPATTPKKAKKAASADGADAPAADAPTAAGQ. Residues 129-148 are compositionally biased toward low complexity; the sequence is AASADGADAPAADAPTAAGQ.

The protein belongs to the bacterial ribosomal protein bS16 family.

The chain is Small ribosomal subunit protein bS16 from Frankia alni (strain DSM 45986 / CECT 9034 / ACN14a).